The sequence spans 461 residues: Cytochrome c biogenesis protein CcsB (461 aa).

A run of 3 helical transmembrane segments spans residues 32–52 (LRLAIALLLIIALFSISGTVI), 91–111 (TWWFLSLLVLFGTSLTACTFT), and 178–198 (IGPIIVHIGIVTILLGSIWGA).

This sequence belongs to the Ccs1/CcsB family. As to quaternary structure, may interact with CcsA.

The protein localises to the cellular thylakoid membrane. Functionally, required during biogenesis of c-type cytochromes (cytochrome c6 and cytochrome f) at the step of heme attachment. This Trichormus variabilis (strain ATCC 29413 / PCC 7937) (Anabaena variabilis) protein is Cytochrome c biogenesis protein CcsB.